The primary structure comprises 92 residues: Probable Fe(2+)-trafficking protein (92 aa).

Belongs to the Fe(2+)-trafficking protein family.

Functionally, could be a mediator in iron transactions between iron acquisition and iron-requiring processes, such as synthesis and/or repair of Fe-S clusters in biosynthetic enzymes. This chain is Probable Fe(2+)-trafficking protein, found in Shewanella baltica (strain OS223).